Consider the following 704-residue polypeptide: ATP-dependent DNA helicase Hel308 (704 aa).

Residues glutamine 31 and 49-56 (SPTASGKT) each bind ATP. Residues 36 to 200 (RKGLLDGKRL…WLNAELVATN (165 aa)) form the Helicase ATP-binding domain. The DEAH box signature appears at 148–151 (DEFH). The Helicase C-terminal domain maps to 235-439 (AIIAYTLDIV…AFYSFLISII (205 aa)). A binds Hjc region spans residues 366–645 (VVGYMDLIPV…LHARVKDGVK (280 aa)). The required for helicase activity stretch occupies residues 432-644 (YSFLISIIAS…ELHARVKDGV (213 aa)). The tract at residues 646-704 (PELIELVKIPGIGRVRARLLYQHDIKKPEDIVLNPEKVKQLLGPNLGEKIVREAARTIA) is inhibits intrinsic ATPase, and helicase.

This sequence belongs to the helicase family. Hel308 subfamily. Monomer; forms a 1:2 complex with Hjc, which may form a complex with Holliday junction DNA. Mg(2+) serves as cofactor.

The enzyme catalyses Couples ATP hydrolysis with the unwinding of duplex DNA by translocating in the 3'-5' direction.. It carries out the reaction ATP + H2O = ADP + phosphate + H(+). The catalysed reaction is Couples ATP hydrolysis with the unwinding of duplex DNA at the replication fork by translocating in the 5'-3' direction. This creates two antiparallel DNA single strands (ssDNA). The leading ssDNA polymer is the template for DNA polymerase III holoenzyme which synthesizes a continuous strand.. With respect to regulation, helicase activity is inhibited by Hjc and by PCNA123 and PCNA323. Functionally, an ATP, Mg(2+)-dependent DNA 3'-5' and 5'-3' helicase that may be involved in repair of stalled replication forks. Stimulated by both ss and dsDNA. Unwinds both leading and lagging strands in replication fork structures, unlike orthologs in P.furiosus and M.thermautotrophicus which only unwind the lagging strand and only have 3'-5' helicase activity. Preferentially binds dsDNA with overhangs or branched DNA. Able to anneal DNA substrates that could form a replication fork-like structure, has replication fork reversal activity (at least in vitro). The polypeptide is ATP-dependent DNA helicase Hel308 (Sulfurisphaera tokodaii (strain DSM 16993 / JCM 10545 / NBRC 100140 / 7) (Sulfolobus tokodaii)).